A 912-amino-acid polypeptide reads, in one-letter code: Bifunctional uridylyltransferase/uridylyl-removing enzyme (912 aa).

Residues 1–369 (MLPRIANQRA…FFASLRSRRK (369 aa)) are uridylyltransferase. Residues 370–722 (KVGPFFIEGG…AHWYPARGAT (353 aa)) form a uridylyl-removing region. An HD domain is found at 486–608 (VDEHTIRAIG…VQSQERLRLL (123 aa)). ACT domains are found at residues 723-802 (LVTV…LVPQ) and 834-912 (VIEV…KDAA).

This sequence belongs to the GlnD family. Mg(2+) is required as a cofactor.

It carries out the reaction [protein-PII]-L-tyrosine + UTP = [protein-PII]-uridylyl-L-tyrosine + diphosphate. The catalysed reaction is [protein-PII]-uridylyl-L-tyrosine + H2O = [protein-PII]-L-tyrosine + UMP + H(+). With respect to regulation, uridylyltransferase (UTase) activity is inhibited by glutamine, while glutamine activates uridylyl-removing (UR) activity. Functionally, modifies, by uridylylation and deuridylylation, the PII regulatory proteins (GlnB and homologs), in response to the nitrogen status of the cell that GlnD senses through the glutamine level. Under low glutamine levels, catalyzes the conversion of the PII proteins and UTP to PII-UMP and PPi, while under higher glutamine levels, GlnD hydrolyzes PII-UMP to PII and UMP (deuridylylation). Thus, controls uridylylation state and activity of the PII proteins, and plays an important role in the regulation of nitrogen assimilation and metabolism. This is Bifunctional uridylyltransferase/uridylyl-removing enzyme from Novosphingobium aromaticivorans (strain ATCC 700278 / DSM 12444 / CCUG 56034 / CIP 105152 / NBRC 16084 / F199).